Reading from the N-terminus, the 545-residue chain is MAAKEVKFGRSAREKMLRGVDILADAVKVTLGPKGRNVVIDKSFGAPRITKDGVSVAKEIELEDKFENMGAQMVREVASKTNDIAGDGTTTATVLAQAIVREGAKAVAAGMNPMDLKRGIDLAVAEVVKDLLAKAKKINTSDEVAQVGTISANGEKQIGLDIAEAMQKVGNEGVITVEEAKTAETELEVVEGMQFDRGYLSPYFVTNPEKMVADLEDAYILLHEKKLSNLQAMLPVLEAVVQTGKPLLIIAEDVEGEALATLVVNKLRGGLKIAAVKAPGFGDRRKAMLEDIAILTGGTVISEDLGIKLESVTLDMLGRAKKVSITKENTTIVDGAGQKSDIEGRVAQIKAQIEETTSDYDREKLQERLAKLAGGVAVIRVGGATEVEVKEKKDRIDDALNATRAAVQEGIVPGGGVALLRSSVKITVKGENDDQDAGVNIVRRALQSPARQIVENAGDEASIVVGKILEKDTDDFGYNAQTGEYGDMIAMGIIDPVKVVRTALQDAASVASLLITTEAMIAELPKKDAPAMPGGMGGMGGMDMM.

ATP is bound by residues 30–33, lysine 51, 87–91, glycine 415, and aspartate 495; these read TLGP and DGTTT.

It belongs to the chaperonin (HSP60) family. As to quaternary structure, forms a cylinder of 14 subunits composed of two heptameric rings stacked back-to-back. Interacts with the co-chaperonin GroES.

The protein localises to the cytoplasm. The enzyme catalyses ATP + H2O + a folded polypeptide = ADP + phosphate + an unfolded polypeptide.. Functionally, together with its co-chaperonin GroES, plays an essential role in assisting protein folding. The GroEL-GroES system forms a nano-cage that allows encapsulation of the non-native substrate proteins and provides a physical environment optimized to promote and accelerate protein folding. In Sinorhizobium medicae (strain WSM419) (Ensifer medicae), this protein is Chaperonin GroEL 1.